Consider the following 171-residue polypeptide: Peptide methionine sulfoxide reductase MsrA (171 aa).

Cys13 is an active-site residue.

The protein belongs to the MsrA Met sulfoxide reductase family.

It catalyses the reaction L-methionyl-[protein] + [thioredoxin]-disulfide + H2O = L-methionyl-(S)-S-oxide-[protein] + [thioredoxin]-dithiol. The catalysed reaction is [thioredoxin]-disulfide + L-methionine + H2O = L-methionine (S)-S-oxide + [thioredoxin]-dithiol. Its function is as follows. Has an important function as a repair enzyme for proteins that have been inactivated by oxidation. Catalyzes the reversible oxidation-reduction of methionine sulfoxide in proteins to methionine. The polypeptide is Peptide methionine sulfoxide reductase MsrA (Mycobacterium sp. (strain MCS)).